A 372-amino-acid polypeptide reads, in one-letter code: Ciliary neurotrophic factor receptor subunit alpha (372 aa).

An N-terminal signal peptide occupies residues 1 to 22 (MAASVPWACCAVLAAAAAAVYT). Residues 27 to 104 (PQEAPHVQYE…WHLRHQVLLH (78 aa)) enclose the Ig-like C2-type domain. C46 and C89 are oxidised to a cystine. N-linked (GlcNAc...) asparagine glycosylation is found at N60, N70, N142, and N190. 2 consecutive Fibronectin type-III domains span residues 108–205 (PPRE…VKPD) and 206–306 (PPEN…TEEP). The short motif at 290–294 (WSDWS) is the WSXWS motif element. Positions 301–338 (PWTEEPRHLTTEAQAPETTTSTTSSLAPPPTTKICDPG) are disordered. Residues 311 to 326 (TEAQAPETTTSTTSSL) are compositionally biased toward low complexity. Residue S342 is the site of GPI-anchor amidated serine attachment. The propeptide at 343 to 372 (GGGPSILFLTSVPVTLVLAAAAATANNLLI) is removed in mature form.

It belongs to the type I cytokine receptor family. Type 3 subfamily. In terms of assembly, forms a heterotrimer with LIFR and IL6ST. Interacts with heterodimeric neurotropic cytokine composed of CLCF1/CLC and CRLF1/CLF-1. Either alone or in complex with the heterodimer CLCF1-CRLF1 interacts with SORL1; this interaction may promote internalization and lysosomal degradation.

It localises to the cell membrane. Functionally, binds to CNTF. The alpha subunit provides the receptor specificity. The polypeptide is Ciliary neurotrophic factor receptor subunit alpha (Cntfr) (Mus musculus (Mouse)).